Here is a 469-residue protein sequence, read N- to C-terminus: Siroheme synthase (469 aa).

The interval 1 to 203 (MDYLPIFTDL…GQEQDAKQEL (203 aa)) is precorrin-2 dehydrogenase /sirohydrochlorin ferrochelatase. Residues 22–23 (DV) and 43–44 (PV) contribute to the NAD(+) site. Ser128 carries the post-translational modification Phosphoserine. Positions 214 to 469 (GQVALIGSGP…LQQSAVVKLA (256 aa)) are uroporphyrinogen-III C-methyltransferase. S-adenosyl-L-methionine is bound at residue Pro223. Asp246 (proton acceptor) is an active-site residue. Lys268 serves as the catalytic Proton donor. Residues 299–301 (GGD), Val304, 329–330 (TA), Met381, and Gly410 contribute to the S-adenosyl-L-methionine site.

In the N-terminal section; belongs to the precorrin-2 dehydrogenase / sirohydrochlorin ferrochelatase family. This sequence in the C-terminal section; belongs to the precorrin methyltransferase family.

It carries out the reaction uroporphyrinogen III + 2 S-adenosyl-L-methionine = precorrin-2 + 2 S-adenosyl-L-homocysteine + H(+). The enzyme catalyses precorrin-2 + NAD(+) = sirohydrochlorin + NADH + 2 H(+). It catalyses the reaction siroheme + 2 H(+) = sirohydrochlorin + Fe(2+). Its pathway is cofactor biosynthesis; adenosylcobalamin biosynthesis; precorrin-2 from uroporphyrinogen III: step 1/1. The protein operates within cofactor biosynthesis; adenosylcobalamin biosynthesis; sirohydrochlorin from precorrin-2: step 1/1. It functions in the pathway porphyrin-containing compound metabolism; siroheme biosynthesis; precorrin-2 from uroporphyrinogen III: step 1/1. It participates in porphyrin-containing compound metabolism; siroheme biosynthesis; siroheme from sirohydrochlorin: step 1/1. Its pathway is porphyrin-containing compound metabolism; siroheme biosynthesis; sirohydrochlorin from precorrin-2: step 1/1. In terms of biological role, multifunctional enzyme that catalyzes the SAM-dependent methylations of uroporphyrinogen III at position C-2 and C-7 to form precorrin-2 via precorrin-1. Then it catalyzes the NAD-dependent ring dehydrogenation of precorrin-2 to yield sirohydrochlorin. Finally, it catalyzes the ferrochelation of sirohydrochlorin to yield siroheme. The polypeptide is Siroheme synthase (Photobacterium profundum (strain SS9)).